We begin with the raw amino-acid sequence, 539 residues long: Chaperonin GroEL (539 aa).

Residues Thr-29–Pro-32, Asp-86–Thr-90, Gly-413, and Asp-494 contribute to the ATP site.

The protein belongs to the chaperonin (HSP60) family. In terms of assembly, forms a cylinder of 14 subunits composed of two heptameric rings stacked back-to-back. Interacts with the co-chaperonin GroES.

It is found in the cytoplasm. It carries out the reaction ATP + H2O + a folded polypeptide = ADP + phosphate + an unfolded polypeptide.. Together with its co-chaperonin GroES, plays an essential role in assisting protein folding. The GroEL-GroES system forms a nano-cage that allows encapsulation of the non-native substrate proteins and provides a physical environment optimized to promote and accelerate protein folding. The sequence is that of Chaperonin GroEL from Finegoldia magna (strain ATCC 29328 / DSM 20472 / WAL 2508) (Peptostreptococcus magnus).